The following is a 141-amino-acid chain: MATIKVDVVSAEEQIFSGEAKFVALPGETGELGILPGHTPLITRIRPGAVRIEVEGGNDEFVFVAGGILEVQPGAVTVLADTAIRGKDLDAAKAEEARKRAEETLQNVKSDLDLAKAQSELATAMAQLEAIQRLAKIRSRH.

This sequence belongs to the ATPase epsilon chain family. F-type ATPases have 2 components, CF(1) - the catalytic core - and CF(0) - the membrane proton channel. CF(1) has five subunits: alpha(3), beta(3), gamma(1), delta(1), epsilon(1). CF(0) has three main subunits: a, b and c.

The protein resides in the cell inner membrane. Its function is as follows. Produces ATP from ADP in the presence of a proton gradient across the membrane. This is ATP synthase epsilon chain from Burkholderia cenocepacia (strain ATCC BAA-245 / DSM 16553 / LMG 16656 / NCTC 13227 / J2315 / CF5610) (Burkholderia cepacia (strain J2315)).